The chain runs to 89 residues: Acylphosphatase (89 aa).

The Acylphosphatase-like domain occupies 4-89 (SRRFLVSGTV…EQPPEGFRVL (86 aa)). Active-site residues include arginine 19 and asparagine 37.

Belongs to the acylphosphatase family.

The catalysed reaction is an acyl phosphate + H2O = a carboxylate + phosphate + H(+). The sequence is that of Acylphosphatase (acyP) from Alkalilimnicola ehrlichii (strain ATCC BAA-1101 / DSM 17681 / MLHE-1).